The chain runs to 500 residues: NAD(P)H-quinone oxidoreductase chain 4, chloroplastic (500 aa).

14 consecutive transmembrane segments (helical) span residues 4 to 24 (FPWL…MLFL), 35 to 55 (YTIC…CYNF), 87 to 107 (IGTI…AFPV), 113 to 130 (FFHF…GSFS), 134 to 154 (LLLF…LLSM), 167 to 187 (FILY…GISL), 211 to 231 (ILFY…IPLH), 242 to 262 (HYST…YGLV), 272 to 292 (AHSM…IYAA), 305 to 325 (IAYS…SITD), 330 to 350 (GAIL…FLAG), 386 to 406 (LALP…GIIT), 416 to 436 (ILII…LLSM), and 462 to 482 (LFLS…PDFV).

This sequence belongs to the complex I subunit 4 family.

The protein resides in the plastid. Its subcellular location is the chloroplast thylakoid membrane. The enzyme catalyses a plastoquinone + NADH + (n+1) H(+)(in) = a plastoquinol + NAD(+) + n H(+)(out). It carries out the reaction a plastoquinone + NADPH + (n+1) H(+)(in) = a plastoquinol + NADP(+) + n H(+)(out). This Arabis hirsuta (Hairy rock-cress) protein is NAD(P)H-quinone oxidoreductase chain 4, chloroplastic.